Here is a 156-residue protein sequence, read N- to C-terminus: Small ribosomal subunit protein uS7 (156 aa).

This sequence belongs to the universal ribosomal protein uS7 family. As to quaternary structure, part of the 30S ribosomal subunit. Contacts proteins S9 and S11.

Functionally, one of the primary rRNA binding proteins, it binds directly to 16S rRNA where it nucleates assembly of the head domain of the 30S subunit. Is located at the subunit interface close to the decoding center, probably blocks exit of the E-site tRNA. The protein is Small ribosomal subunit protein uS7 of Sphingopyxis alaskensis (strain DSM 13593 / LMG 18877 / RB2256) (Sphingomonas alaskensis).